The following is a 231-amino-acid chain: Cytochrome c oxidase subunit 2 (231 aa).

Residues 1–14 are Mitochondrial intermembrane-facing; that stretch reads MAHPVHVGLKEATS. A helical membrane pass occupies residues 15–45; the sequence is PFMEELIAFHDHTLMIIFLISSLVLYIISMM. Residues 46-59 lie on the Mitochondrial matrix side of the membrane; sequence LTTKLTHTSTMNAQ. The chain crosses the membrane as a helical span at residues 60–87; it reads EIEIIWTILPAIILIMIALPSLRILYMT. Residues 88 to 231 lie on the Mitochondrial intermembrane side of the membrane; sequence DEFNKPYLTL…WASYLYIVSL (144 aa). Residues histidine 161, cysteine 196, glutamate 198, cysteine 200, histidine 204, and methionine 207 each coordinate Cu cation. Mg(2+) is bound at residue glutamate 198.

It belongs to the cytochrome c oxidase subunit 2 family. Component of the cytochrome c oxidase (complex IV, CIV), a multisubunit enzyme composed of 14 subunits. The complex is composed of a catalytic core of 3 subunits MT-CO1, MT-CO2 and MT-CO3, encoded in the mitochondrial DNA, and 11 supernumerary subunits COX4I, COX5A, COX5B, COX6A, COX6B, COX6C, COX7A, COX7B, COX7C, COX8 and NDUFA4, which are encoded in the nuclear genome. The complex exists as a monomer or a dimer and forms supercomplexes (SCs) in the inner mitochondrial membrane with NADH-ubiquinone oxidoreductase (complex I, CI) and ubiquinol-cytochrome c oxidoreductase (cytochrome b-c1 complex, complex III, CIII), resulting in different assemblies (supercomplex SCI(1)III(2)IV(1) and megacomplex MCI(2)III(2)IV(2)). Found in a complex with TMEM177, COA6, COX18, COX20, SCO1 and SCO2. Interacts with TMEM177 in a COX20-dependent manner. Interacts with COX20. Interacts with COX16. Cu cation is required as a cofactor.

Its subcellular location is the mitochondrion inner membrane. The catalysed reaction is 4 Fe(II)-[cytochrome c] + O2 + 8 H(+)(in) = 4 Fe(III)-[cytochrome c] + 2 H2O + 4 H(+)(out). Component of the cytochrome c oxidase, the last enzyme in the mitochondrial electron transport chain which drives oxidative phosphorylation. The respiratory chain contains 3 multisubunit complexes succinate dehydrogenase (complex II, CII), ubiquinol-cytochrome c oxidoreductase (cytochrome b-c1 complex, complex III, CIII) and cytochrome c oxidase (complex IV, CIV), that cooperate to transfer electrons derived from NADH and succinate to molecular oxygen, creating an electrochemical gradient over the inner membrane that drives transmembrane transport and the ATP synthase. Cytochrome c oxidase is the component of the respiratory chain that catalyzes the reduction of oxygen to water. Electrons originating from reduced cytochrome c in the intermembrane space (IMS) are transferred via the dinuclear copper A center (CU(A)) of subunit 2 and heme A of subunit 1 to the active site in subunit 1, a binuclear center (BNC) formed by heme A3 and copper B (CU(B)). The BNC reduces molecular oxygen to 2 water molecules using 4 electrons from cytochrome c in the IMS and 4 protons from the mitochondrial matrix. The polypeptide is Cytochrome c oxidase subunit 2 (MT-CO2) (Brachyteles hypoxanthus (Northern muriqui)).